A 325-amino-acid chain; its full sequence is GMP reductase (325 aa).

Cysteine 173 functions as the Thioimidate intermediate in the catalytic mechanism. 202–225 (IIADGGIRSHGDIAKSVRFGATMV) contacts NADP(+).

This sequence belongs to the IMPDH/GMPR family. GuaC type 2 subfamily.

It carries out the reaction IMP + NH4(+) + NADP(+) = GMP + NADPH + 2 H(+). Functionally, catalyzes the irreversible NADPH-dependent deamination of GMP to IMP. It functions in the conversion of nucleobase, nucleoside and nucleotide derivatives of G to A nucleotides, and in maintaining the intracellular balance of A and G nucleotides. In Acidovorax sp. (strain JS42), this protein is GMP reductase.